Here is a 608-residue protein sequence, read N- to C-terminus: Serine/threonine-protein kinase ROP17 (608 aa).

A signal peptide spans 1 to 21 (MELVLCFVIITISGVIRESSA). Asparagine 76 is a glycosylation site (N-linked (GlcNAc...) asparagine). The Protein kinase domain maps to 283-579 (LKKRGFLGGG…QQALEQFSLL (297 aa)). ATP is bound by residues 289–297 (LGGGGFGLV) and lysine 312. Catalysis depends on aspartate 436, which acts as the Proton acceptor.

It belongs to the protein kinase superfamily. Ser/Thr protein kinase family. As to quaternary structure, interacts with ROP5; interaction with ROP5 does not affect kinase activity. Interacts with human BCL2; the interaction probably promotes BCL2 phosphorylation and degradation.

Its subcellular location is the secreted. It localises to the cytoplasmic vesicle. The protein resides in the secretory vesicle. The protein localises to the rhoptry. It is found in the parasitophorous vacuole membrane. The enzyme catalyses L-threonyl-[protein] + ATP = O-phospho-L-threonyl-[protein] + ADP + H(+). The catalysed reaction is L-seryl-[protein] + ATP = O-phospho-L-seryl-[protein] + ADP + H(+). Its function is as follows. Protein kinase. Virulence factor. Promotes migration of Toxoplasma-infected macrophages through collagen matrix, facilitating parasite transport through tissues and systemic dissemination. Plays a role in the translocation of dense granule effectors, such as GRA16 and GRA24, across the parasitophorous vacuole membrane in Toxoplasma-infected host cells. Phosphorylates mouse IRGB6 (TGTP1/TGTP2), an immunity-related GTPase (IRG) that protects mice from infection by certain intracellular pathogens; the phosphorylation leads to the disassembly of IRGB6 polymers into monomers and dimers. May modulate gene expression in human cells. Promotes autophagy in human cells via modulation of the BCL2-BECN1 pathway. The chain is Serine/threonine-protein kinase ROP17 from Toxoplasma gondii.